The primary structure comprises 399 residues: Digeranylgeranylglycerophospholipid reductase (399 aa).

Residues Gly-15, Glu-34, Cys-45, Ala-46, Gly-48, Arg-99, Ala-123, Asp-280, Gly-292, and Ile-293 each coordinate FAD.

This sequence belongs to the geranylgeranyl reductase family. DGGGPL reductase subfamily. The cofactor is FAD.

It catalyses the reaction a 2,3-bis-O-phytanyl-sn-glycerol 1-phospholipid + 8 oxidized 2[4Fe-4S]-[ferredoxin] = a 2,3-bis-O-(geranylgeranyl)-sn-glycerol 1-phospholipid + 8 reduced 2[4Fe-4S]-[ferredoxin] + 16 H(+). It carries out the reaction 2,3-bis-O-(phytanyl)-sn-glycerol 1-phosphate + 8 oxidized 2[4Fe-4S]-[ferredoxin] = 2,3-bis-O-(geranylgeranyl)-sn-glycerol 1-phosphate + 8 reduced 2[4Fe-4S]-[ferredoxin] + 16 H(+). The enzyme catalyses a 2,3-bis-O-phytanyl-sn-glycerol 1-phospholipid + 8 A = a 2,3-bis-O-(geranylgeranyl)-sn-glycerol 1-phospholipid + 8 AH2. The catalysed reaction is CDP-2,3-bis-O-(geranylgeranyl)-sn-glycerol + 8 AH2 = CDP-2,3-bis-O-(phytanyl)-sn-glycerol + 8 A. It catalyses the reaction archaetidylserine + 8 AH2 = 2,3-bis-O-phytanyl-sn-glycero-3-phospho-L-serine + 8 A. The protein operates within membrane lipid metabolism; glycerophospholipid metabolism. Is involved in the reduction of 2,3-digeranylgeranylglycerophospholipids (unsaturated archaeols) into 2,3-diphytanylglycerophospholipids (saturated archaeols) in the biosynthesis of archaeal membrane lipids. Catalyzes the formation of archaetidic acid (2,3-di-O-phytanyl-sn-glyceryl phosphate) from 2,3-di-O-geranylgeranylglyceryl phosphate (DGGGP) via the hydrogenation of each double bond of the isoprenoid chains. Is also probably able to reduce double bonds of geranyl groups in CDP-2,3-bis-O-(geranylgeranyl)-sn-glycerol and archaetidylserine, thus acting at various stages in the biosynthesis of archaeal membrane lipids. The sequence is that of Digeranylgeranylglycerophospholipid reductase from Methanosphaerula palustris (strain ATCC BAA-1556 / DSM 19958 / E1-9c).